The following is a 331-amino-acid chain: Ketol-acid reductoisomerase (NADP(+)) (331 aa).

One can recognise a KARI N-terminal Rossmann domain in the interval 2 to 182 (AQLFYDSDAD…GGTRAGILET (181 aa)). Residues 25-28 (YGSQ), S51, S53, and 83-86 (DEFQ) each bind NADP(+). H108 is an active-site residue. Residue G134 coordinates NADP(+). The KARI C-terminal knotted domain maps to 183-328 (NFKEETETDL…KGLRSMFSWL (146 aa)). Residues D191, E195, E227, and E231 each contribute to the Mg(2+) site. S252 is a binding site for substrate.

This sequence belongs to the ketol-acid reductoisomerase family. Mg(2+) is required as a cofactor.

It catalyses the reaction (2R)-2,3-dihydroxy-3-methylbutanoate + NADP(+) = (2S)-2-acetolactate + NADPH + H(+). The enzyme catalyses (2R,3R)-2,3-dihydroxy-3-methylpentanoate + NADP(+) = (S)-2-ethyl-2-hydroxy-3-oxobutanoate + NADPH + H(+). It functions in the pathway amino-acid biosynthesis; L-isoleucine biosynthesis; L-isoleucine from 2-oxobutanoate: step 2/4. It participates in amino-acid biosynthesis; L-valine biosynthesis; L-valine from pyruvate: step 2/4. Involved in the biosynthesis of branched-chain amino acids (BCAA). Catalyzes an alkyl-migration followed by a ketol-acid reduction of (S)-2-acetolactate (S2AL) to yield (R)-2,3-dihydroxy-isovalerate. In the isomerase reaction, S2AL is rearranged via a Mg-dependent methyl migration to produce 3-hydroxy-3-methyl-2-ketobutyrate (HMKB). In the reductase reaction, this 2-ketoacid undergoes a metal-dependent reduction by NADPH to yield (R)-2,3-dihydroxy-isovalerate. The sequence is that of Ketol-acid reductoisomerase (NADP(+)) from Synechococcus sp. (strain CC9605).